Here is an 84-residue protein sequence, read N- to C-terminus: Limulin (84 aa).

Residues 6–84 (ITSKVKFPPS…DEQGDFLFNV (79 aa)) enclose the Pentraxin (PTX) domain. Positions 67 and 68 each coordinate Ca(2+).

Belongs to the pentraxin family. As to quaternary structure, homopentamer. Pentraxin (or pentaxin) have a discoid arrangement of 5 non-covalently bound subunits. Ca(2+) is required as a cofactor. In terms of processing, a disulfide bond links Cys-38 to a Cys in the C-terminal half of the chain of 163 residues.

In terms of biological role, lectin that binds sialic acid. Displays antiviral activity and therefore may contribute to defense against infections. In Limulus polyphemus (Atlantic horseshoe crab), this protein is Limulin.